A 150-amino-acid chain; its full sequence is Protein-export protein SecB (150 aa).

The protein belongs to the SecB family. As to quaternary structure, homotetramer, a dimer of dimers. One homotetramer interacts with 1 SecA dimer.

It is found in the cytoplasm. Its function is as follows. One of the proteins required for the normal export of preproteins out of the cell cytoplasm. It is a molecular chaperone that binds to a subset of precursor proteins, maintaining them in a translocation-competent state. It also specifically binds to its receptor SecA. The protein is Protein-export protein SecB of Acidovorax ebreus (strain TPSY) (Diaphorobacter sp. (strain TPSY)).